We begin with the raw amino-acid sequence, 920 residues long: 2-oxoadipate dehydrogenase complex component E1 (920 aa).

Residues lysine 183 and lysine 188 each carry the N6-succinyllysine modification. Residues 299 to 318 (GKTRGRQQSQEDGDYSPNGS) are disordered. An N6-succinyllysine mark is found at lysine 800 and lysine 818.

Belongs to the alpha-ketoglutarate dehydrogenase family. In terms of assembly, the 2-oxoadipate dehydrogenase complex is composed of OADH (2-oxoadipate dehydrogenase; E1a), DLST (dihydrolipoamide succinyltransferase; E2) and DLD (dihydrolipoamide dehydrogenase; E3). E1a functional unit is a dimer. Requires thiamine diphosphate as cofactor.

It localises to the mitochondrion. It catalyses the reaction N(6)-[(R)-lipoyl]-L-lysyl-[protein] + 2-oxoadipate + H(+) = N(6)-[(R)-S(8)-glutaryldihydrolipoyl]-L-lysyl-[protein] + CO2. The protein operates within amino-acid degradation. In terms of biological role, 2-oxoadipate dehydrogenase (E1a) component of the 2-oxoadipate dehydrogenase complex (OADHC). Participates in the first step, rate limiting for the overall conversion of 2-oxoadipate (alpha-ketoadipate) to glutaryl-CoA and CO(2) catalyzed by the whole OADHC. Catalyzes the irreversible decarboxylation of 2-oxoadipate via the thiamine diphosphate (ThDP) cofactor and subsequent transfer of the decarboxylated acyl intermediate on an oxidized dihydrolipoyl group that is covalently amidated to the E2 enzyme (dihydrolipoyllysine-residue succinyltransferase or DLST). Can catalyze the decarboxylation of 2-oxoglutarate in vitro, but at a much lower rate than 2-oxoadipate. Responsible for the last step of L-lysine, L-hydroxylysine and L-tryptophan catabolism with the common product being 2-oxoadipate. This Rattus norvegicus (Rat) protein is 2-oxoadipate dehydrogenase complex component E1 (Dhtkd1).